The primary structure comprises 758 residues: Spastin (758 aa).

Residues 1–103 (MVRTKNQSSS…SPRSGHHHSY (103 aa)) are disordered. The Cytoplasmic segment spans residues 1 to 121 (MVRTKNQSSS…KQNLYVVSFP (121 aa)). Positions 1 to 159 (MVRTKNQSSS…VIYRPHRRDC (159 aa)) are interaction with atl. The tract at residues 1-210 (MVRTKNQSSS…RPIQPLEMAA (210 aa)) is required for localization to punctate cytoplasmic foci. Low complexity-rich tracts occupy residues 8–28 (SSSSSASSSSTKSPIKSSSGA), 43–58 (RSSSASNVAAVVAGGS), 66–76 (SSNRRSPGSSP), and 85–95 (TDDLTPTTCSP). Positions 122–142 (IIFLFNVLRSLIYQLFCIFRY) form an intramembrane region, helical. Over 143 to 758 (LYGASTKVIY…WSQDYGDITI (616 aa)) the chain is Cytoplasmic. Composition is skewed to polar residues over residues 169–180 (SKEQQQSLNHPS) and 189–198 (QEQQLSNQPQ). The disordered stretch occupies residues 169 to 202 (SKEQQQSLNHPSELNREGDGQEQQLSNQPQRFRP). The tract at residues 208 to 758 (MAANRPGGGY…WSQDYGDITI (551 aa)) is sufficient for interaction with microtubules and microtubule severing. In terms of domain architecture, MIT spans 233–308 (HRRAFEYISK…SMARDRLHFL (76 aa)). Residues 353–454 (RVRSSGYGPK…GPSGSGASTP (102 aa)) form a disordered region. Composition is skewed to polar residues over residues 390 to 406 (NKSQTLPRNLGSKTSVG) and 425 to 454 (QFSSGRNTPPQRSRTPINNNGPSGSGASTP). Thr-439 bears the Phosphothreonine mark. The required for interaction with microtubules stretch occupies residues 443 to 455 (NNGPSGSGASTPV). 523-530 (GPPGNGKT) lines the ATP pocket.

This sequence belongs to the AAA ATPase family. Spastin subfamily. As to quaternary structure, homohexamer. The homohexamer is stabilized by ATP-binding. The homohexamer may adopt a ring conformation through which microtubules pass prior to being severed. Interacts with microtubules. Interacts with atl; may be involved in microtubule dynamics.

It is found in the membrane. It localises to the cytoplasm. The protein resides in the cytoskeleton. Its subcellular location is the microtubule organizing center. The protein localises to the centrosome. It is found in the chromosome. It localises to the lipid droplet. It carries out the reaction n ATP + n H2O + a microtubule = n ADP + n phosphate + (n+1) alpha/beta tubulin heterodimers.. Its function is as follows. ATP-dependent microtubule severing protein. Stimulates microtubule minus-end depolymerization and poleward microtubule flux in the mitotic spindle. Regulates microtubule stability in the neuromuscular junction synapse. Involved in lipid metabolism by regulating the size and distribution of lipid droplets. Involved in axon regeneration by regulating microtubule severing. The protein is Spastin of Drosophila melanogaster (Fruit fly).